A 413-amino-acid polypeptide reads, in one-letter code: MSLKGKLQRMKKHMALDEGEQKIEAGKQENHFDDIPFLEEWEAFGMKPFIFEDEYCLIREVEYPLSHRHGLYSFSELEEVITLWNQSGLSHTLSAKGYNKNNLFFFDTETTGLGGGAGNTIFLLGHARVYEDRVTVKQHLLPKPGNEVALYQSFLSEVDITSLVTYNGKAFDWPQVKTRHTLIRDRLPKLPEFGHFDLLHGARRLWKHKMDRVSLGTVEKEELGIRRLEDTPGYLAPMLYFHFIKAQEPDLLKGVLHHNEMDVLSLISLYIHMSKKILSESHAPKEHSEAYAMAKWFMAHKETDQAIKQLERLIEKSFEDQDSARLDLSLLYKKQNRLEEAVPLWEKLSRSQNQKCRYAAVIELAKYFEHKKKEFGKALQVAEQSLSDAACLSEKETEKLHVRIARLKRKYSS.

This is an uncharacterized protein from Bacillus subtilis (strain 168).